The primary structure comprises 354 residues: Protein NDH-DEPENDENT CYCLIC ELECTRON FLOW 5 (354 aa).

The transit peptide at 1-49 directs the protein to the chloroplast; the sequence is MALVHYMNVSRSTFPLSRSSKINLSSSFASLPLQFHKNIKRLESSVPPS.

It localises to the plastid. It is found in the chloroplast thylakoid membrane. Required for both formation and activity of the chloroplast NAD(P)H dehydrogenase (NDH) complex of the photosynthetic electron transport chain. May function in assembly or stabilization of the NDH complex. This is Protein NDH-DEPENDENT CYCLIC ELECTRON FLOW 5 from Arabidopsis thaliana (Mouse-ear cress).